A 312-amino-acid chain; its full sequence is Glyoxylate/hydroxypyruvate reductase A (312 aa).

Arg227 is a catalytic residue. The active-site Proton donor is His275.

This sequence belongs to the D-isomer specific 2-hydroxyacid dehydrogenase family. GhrA subfamily.

It localises to the cytoplasm. It carries out the reaction glycolate + NADP(+) = glyoxylate + NADPH + H(+). The enzyme catalyses (R)-glycerate + NAD(+) = 3-hydroxypyruvate + NADH + H(+). The catalysed reaction is (R)-glycerate + NADP(+) = 3-hydroxypyruvate + NADPH + H(+). In terms of biological role, catalyzes the NADPH-dependent reduction of glyoxylate and hydroxypyruvate into glycolate and glycerate, respectively. The sequence is that of Glyoxylate/hydroxypyruvate reductase A from Escherichia coli O157:H7.